The chain runs to 330 residues: Pseudouridine-5'-phosphate glycosidase (330 aa).

The active-site Proton donor is the E50. Substrate-binding residues include K112 and V132. Position 164 (D164) interacts with Mn(2+). 166–168 (SSD) contacts substrate. The active-site Nucleophile is the K185.

This sequence belongs to the pseudouridine-5'-phosphate glycosidase family. Homotrimer. Mn(2+) serves as cofactor.

It is found in the peroxisome. The catalysed reaction is D-ribose 5-phosphate + uracil = psi-UMP + H2O. Catalyzes the reversible cleavage of pseudouridine 5'-phosphate (PsiMP) to ribose 5-phosphate and uracil. Functions biologically in the cleavage direction, as part of a pseudouridine degradation pathway. Acts together with the pseudouridine kinase PUKI in the peroxisome to prevent toxic pseudouridine monophosphate accumulation. Can catalyze the formation of pseudouridine 5'-phosphate (reverse reaction) in vitro, with a catalytic efficiency 4 times lower than the hydrolysis reaction. In Arabidopsis thaliana (Mouse-ear cress), this protein is Pseudouridine-5'-phosphate glycosidase.